Consider the following 1191-residue polypeptide: Rho GTPase-activating protein 20 (1191 aa).

Over residues 1–23 the composition is skewed to polar residues; it reads MEAMSPQQETLGGQPGRSSSLTG. Residues 1-45 form a disordered region; the sequence is MEAMSPQQETLGGQPGRSSSLTGVSRLAGGSCTKKKMKTLAERRR. Phosphoserine is present on Ser46. Residues 78–180 enclose the PH domain; sequence SLVCSNRTLL…EQKDKWLSLL (103 aa). Residues 194-295 form the Ras-associating domain; sequence KSIPLKIFAK…TPFNLQEPFL (102 aa). The Rho-GAP domain occupies 365–551; sequence ISLPNICEND…FLIENCLRIF (187 aa). Phosphoserine occurs at positions 704 and 730. 4 disordered regions span residues 768 to 791, 926 to 1014, 1052 to 1123, and 1140 to 1191; these read SKKNATTQNTKKKSLSGSEGNHVK, RLNL…SRPA, KKAK…RHCS, and HEEI…TKDI. Low complexity predominate over residues 934–961; it reads SYSSLSSPGTSPSGSSVSSQDSAFSQIS. Polar residues-rich tracts occupy residues 962–981 and 1103–1116; these read EHSVFTPTETSSPIDCTFQA and PVQSAQRCSSSPFQ. A compositionally biased stretch (basic and acidic residues) spans 1182 to 1191; that stretch reads IEDRYLTKDI.

In terms of tissue distribution, expressed predominantly in the brain. Lower expression is found in lymph nodes.

In terms of biological role, GTPase activator for the Rho-type GTPases by converting them to an inactive GDP-bound state. In Homo sapiens (Human), this protein is Rho GTPase-activating protein 20 (ARHGAP20).